We begin with the raw amino-acid sequence, 158 residues long: Small ribosomal subunit protein bS6 (158 aa).

Over residues 92–149 (RVDEHEEGPSAMMRKADRDRERDDRGPREGGFRGDREGRGDRDGFRGDRGPRRPREDA) the composition is skewed to basic and acidic residues. Residues 92-158 (RVDEHEEGPS…ADAPAAAVEE (67 aa)) form a disordered region.

This sequence belongs to the bacterial ribosomal protein bS6 family.

Functionally, binds together with bS18 to 16S ribosomal RNA. This is Small ribosomal subunit protein bS6 from Rhodopseudomonas palustris (strain ATCC BAA-98 / CGA009).